We begin with the raw amino-acid sequence, 231 residues long: Large ribosomal subunit protein uL1 (231 aa).

The protein belongs to the universal ribosomal protein uL1 family. Part of the 50S ribosomal subunit.

Its function is as follows. Binds directly to 23S rRNA. The L1 stalk is quite mobile in the ribosome, and is involved in E site tRNA release. In terms of biological role, protein L1 is also a translational repressor protein, it controls the translation of the L11 operon by binding to its mRNA. In Agrobacterium fabrum (strain C58 / ATCC 33970) (Agrobacterium tumefaciens (strain C58)), this protein is Large ribosomal subunit protein uL1.